The chain runs to 66 residues: Large ribosomal subunit protein bL33c (66 aa).

The protein belongs to the bacterial ribosomal protein bL33 family.

Its subcellular location is the plastid. The protein localises to the chloroplast. The sequence is that of Large ribosomal subunit protein bL33c from Cryptomeria japonica (Japanese cedar).